The chain runs to 593 residues: Pyruvate kinase isozyme A, chloroplastic (593 aa).

A disordered region spans residues 57 to 94; the sequence is DEPQSSPVLVSENGSGGVLSSATQEYGRNAAPGTDSSS. Residue Arg144 coordinates substrate. Residues Asn146, Asp178, and Thr179 each contribute to the K(+) site. An ATP-binding site is contributed by 146-149; sequence NMCH. Glu343 is a binding site for Mg(2+). Residues Gly366, Asp367, and Ser399 each coordinate substrate. Asp367 provides a ligand contact to Mg(2+).

It belongs to the pyruvate kinase family. Mg(2+) is required as a cofactor. K(+) serves as cofactor. As to expression, highest levels in roots. Also found in stems, leaves and flowers.

The protein resides in the plastid. Its subcellular location is the chloroplast. It catalyses the reaction pyruvate + ATP = phosphoenolpyruvate + ADP + H(+). It participates in carbohydrate degradation; glycolysis; pyruvate from D-glyceraldehyde 3-phosphate: step 5/5. This is Pyruvate kinase isozyme A, chloroplastic from Nicotiana tabacum (Common tobacco).